A 526-amino-acid chain; its full sequence is MGKVIRSLNRFGKKVGNALTSNTAKKIYSTIGKAADEFLESEIGSAAIDGLVQGSVHSIITGESYGESVKQAVLLNVLGSGEEIPDPLSPGERGIQAKLKELEDEQRNELVRLKYNDKIKEKFEKELEEVYNFYNGEANAEIEDEKQFDILNKAVTSYNKILTEEDLQNRRLATRLQKEIGERTHAETVMVKEYRDKIDALKNAIEVERDGMQEEAIQEIAGMTADVLEAASEEVPLIGAGMATAVATGRAIEGAYKLKKVINALSGIDLTHFTHYENRPSVVSTILEYRAKEIPDNALAVSVLIKERAIQENHKELMHIKNEILPRFKKAMDEEKEIMRDRRQMIHPKVMMKFKIPRAQQPQIHVYSAPWDSDDVFFFHCISHHHANDSFFLGFDLSIDLVHYEDLTAHAHAIGAAQTAAGRTLTEAYREFLNLAISKAFGTQMHTRRLVRSKTVHPIYLGSLHYDISFSDLRGNAQRIVYDDELQMHILRGPIHFQRRAILGALKFGCKVLGDRLDVPLFLRNA.

Residues methionine 1–glutamate 42 form an involved in membrane permeabilization region.

The protein belongs to the orbivirus VP5 family.

Its subcellular location is the virion. VP5 protein is one of the two proteins (with VP2) which constitute the virus particle outer capsid. Acts as a membrane permeabilization protein that mediates release of viral particles from endosomal compartments into the cytoplasm. Permeabilization activity is probably negatively regulated by VP2 and is triggered by endosomal degradation of VP2 and exposure to low pH. This chain is Outer capsid protein VP5 (Segment-6), found in Bluetongue virus 1 (isolate South Africa) (BTV 1).